The sequence spans 600 residues: Elongation factor 4 (600 aa).

Positions 4–186 constitute a tr-type G domain; that stretch reads SKIRNFSIIA…EIVKKIPAPQ (183 aa). Residues 16–21 and 133–136 each bind GTP; these read DHGKST and NKID.

This sequence belongs to the TRAFAC class translation factor GTPase superfamily. Classic translation factor GTPase family. LepA subfamily.

The protein resides in the cell inner membrane. It catalyses the reaction GTP + H2O = GDP + phosphate + H(+). Required for accurate and efficient protein synthesis under certain stress conditions. May act as a fidelity factor of the translation reaction, by catalyzing a one-codon backward translocation of tRNAs on improperly translocated ribosomes. Back-translocation proceeds from a post-translocation (POST) complex to a pre-translocation (PRE) complex, thus giving elongation factor G a second chance to translocate the tRNAs correctly. Binds to ribosomes in a GTP-dependent manner. In Trichlorobacter lovleyi (strain ATCC BAA-1151 / DSM 17278 / SZ) (Geobacter lovleyi), this protein is Elongation factor 4.